A 119-amino-acid chain; its full sequence is Venom allergen 2 (119 aa).

The protein belongs to the ant venom allergen 2/4 family. As to quaternary structure, homodimer; disulfide-linked. In terms of tissue distribution, expressed by the venom gland.

It localises to the secreted. This chain is Venom allergen 2, found in Solenopsis richteri (Black imported fire ant).